Reading from the N-terminus, the 341-residue chain is Serine/threonine-protein kinase PDIK1L (341 aa).

Positions 8-334 (YDLIREVGRG…LELRLVQIAF (327 aa)) constitute a Protein kinase domain. ATP-binding positions include 14–22 (VGRGSYGVV) and K37. The Proton acceptor role is filled by D164.

This sequence belongs to the protein kinase superfamily. Ser/Thr protein kinase family. As to expression, expressed in liver, kidney, pancreas, spleen, thymus and prostate.

The protein resides in the nucleus. It carries out the reaction L-seryl-[protein] + ATP = O-phospho-L-seryl-[protein] + ADP + H(+). It catalyses the reaction L-threonyl-[protein] + ATP = O-phospho-L-threonyl-[protein] + ADP + H(+). The chain is Serine/threonine-protein kinase PDIK1L (PDIK1L) from Homo sapiens (Human).